The chain runs to 213 residues: High frequency lysogenization protein HflD (213 aa).

Positions 99-126 (LSSAKGALDTLGNRINGLQRQLEHFDLQ) form a coiled coil.

This sequence belongs to the HflD family. Interacts with CII protein from phage lambda.

Its subcellular location is the cytoplasm. It is found in the cell inner membrane. Functionally, negative regulator of phage lambda lysogenization. Contributes to the degradation of the phage regulatory protein CII. Acts probably by holding CII on the membrane surface, away from the target promoters, but close to the FtsH protease. This chain is High frequency lysogenization protein HflD, found in Escherichia coli O157:H7.